We begin with the raw amino-acid sequence, 453 residues long: Endoglucanase A (453 aa).

The first 26 residues, 1–26 (MNCRKYLLSGLAVFGLAATSAVAALS), serve as a signal peptide directing secretion. Residue Asp-82 is the Nucleophile of the active site. The interval 115 to 126 (TTPTTRKPTTTP) is linker ('hinge') (Pro-Thr box). Residue His-417 is part of the active site.

Belongs to the glycosyl hydrolase 9 (cellulase E) family. Monomer.

It localises to the periplasm. The enzyme catalyses Endohydrolysis of (1-&gt;4)-beta-D-glucosidic linkages in cellulose, lichenin and cereal beta-D-glucans.. High levels of endoglucanase activity detected on acid-swollen cellulose, ball-milled cellulose, and carboxymethyl cellulose; moderate levels detected on filter paper, phosphoric acid-swollen cellulose, lichenan, and xylan. In Fibrobacter succinogenes (Bacteroides succinogenes), this protein is Endoglucanase A (endA).